The sequence spans 547 residues: Elongator complex protein 3 (547 aa).

In terms of domain architecture, Radical SAM core spans 82–372; sequence RTASGIAVVA…YRVQRDIPMP (291 aa). [4Fe-4S] cluster contacts are provided by C99, C109, and C112. A Phosphoserine modification is found at S161. K164 provides a ligand contact to acetyl-CoA. Residue K229 is modified to N6-methyllysine. Y251 carries the phosphotyrosine modification. Residues 396-547 enclose the N-acetyltransferase domain; that stretch reads IQCRDVRTRE…QGPYMVKMLK (152 aa). Residues 474-477, 497-499, and Y530 contribute to the acetyl-CoA site; these read ELHV and FGM.

The protein belongs to the ELP3 family. Component of the elongator complex which consists of ELP1, ELP2, ELP3, ELP4, ELP5 and ELP6. ELP1, ELP2 and ELP3 form the elongator core complex. Interacts with alpha-tubulin. Requires [4Fe-4S] cluster as cofactor. Post-translationally, tyrosine-phosphorylated. Also serine/threonine-phosphorylated.

The protein resides in the cytoplasm. The protein localises to the nucleus. The catalysed reaction is uridine(34) in tRNA + acetyl-CoA + S-adenosyl-L-methionine + H2O = 5-(carboxymethyl)uridine(34) in tRNA + 5'-deoxyadenosine + L-methionine + CoA + 2 H(+). The protein operates within tRNA modification; 5-methoxycarbonylmethyl-2-thiouridine-tRNA biosynthesis. Its function is as follows. Catalytic tRNA acetyltransferase subunit of the elongator complex which is required for multiple tRNA modifications, including mcm5U (5-methoxycarbonylmethyl uridine), mcm5s2U (5-methoxycarbonylmethyl-2-thiouridine), and ncm5U (5-carbamoylmethyl uridine). In the elongator complex, acts as a tRNA uridine(34) acetyltransferase by mediating formation of carboxymethyluridine in the wobble base at position 34 in tRNAs. May also act as a protein lysine acetyltransferase by mediating acetylation of target proteins; such activity is however unclear in vivo and recent evidences suggest that ELP3 primarily acts as a tRNA acetyltransferase. Involved in neurogenesis: regulates the migration and branching of projection neurons in the developing cerebral cortex, through a process depending on alpha-tubulin acetylation. Required for acetylation of GJA1 in the developing cerebral cortex. This chain is Elongator complex protein 3, found in Mus musculus (Mouse).